The primary structure comprises 219 residues: Adenylate kinase (219 aa).

10 to 15 contributes to the ATP binding site; sequence GAGKGT. Residues 30–59 are NMP; sequence STGDMLRAAVKAETPVGLEAKKVMDAGQLV. AMP is bound by residues Thr31, Arg36, 57 to 59, 85 to 88, and Gln92; these read QLV and GFPR. Positions 122–159 are LID; that stretch reads GRRVHLSSGRTYHVLFNPPKQEGLDDETGEPLVQRADD. ATP is bound by residues Arg123 and 132 to 133; that span reads TY. Positions 156 and 167 each coordinate AMP. Gly203 is a binding site for ATP.

This sequence belongs to the adenylate kinase family. As to quaternary structure, monomer.

It is found in the cytoplasm. It catalyses the reaction AMP + ATP = 2 ADP. It functions in the pathway purine metabolism; AMP biosynthesis via salvage pathway; AMP from ADP: step 1/1. Its function is as follows. Catalyzes the reversible transfer of the terminal phosphate group between ATP and AMP. Plays an important role in cellular energy homeostasis and in adenine nucleotide metabolism. This is Adenylate kinase from Chlorobium limicola (strain DSM 245 / NBRC 103803 / 6330).